The sequence spans 307 residues: Ribonuclease Z (307 aa).

Zn(2+) contacts are provided by histidine 63, histidine 65, aspartate 67, histidine 68, histidine 141, aspartate 212, and histidine 270. Aspartate 67 (proton acceptor) is an active-site residue.

Belongs to the RNase Z family. In terms of assembly, homodimer. Requires Zn(2+) as cofactor.

The catalysed reaction is Endonucleolytic cleavage of RNA, removing extra 3' nucleotides from tRNA precursor, generating 3' termini of tRNAs. A 3'-hydroxy group is left at the tRNA terminus and a 5'-phosphoryl group is left at the trailer molecule.. Zinc phosphodiesterase, which displays some tRNA 3'-processing endonuclease activity. Probably involved in tRNA maturation, by removing a 3'-trailer from precursor tRNA. This chain is Ribonuclease Z, found in Bacillus cereus (strain ATCC 10987 / NRS 248).